The sequence spans 69 residues: Cold shock-like protein CspC (69 aa).

In terms of domain architecture, CSD spans Gly6–Val66.

The protein localises to the cytoplasm. The chain is Cold shock-like protein CspC (cspC) from Buchnera aphidicola subsp. Acyrthosiphon pisum (strain APS) (Acyrthosiphon pisum symbiotic bacterium).